Reading from the N-terminus, the 201-residue chain is MTQTDPAFQNLLAEFQALHAREPALAGFVALPDSLTPQPVTPVRIPPAALMESDPDLTTTAYAAIRDAFIAAGAVAQWRLTYQGSRLGADFMDRFACYCLIGEGGPFASDSLAAYVVYMPAGLYYPFHQHPAEEIYFILAGEAEFLMEGHPPRRLGPGDHVFHPSGHPHATRTYDRPFMALVLWRGDLETAPVLTYPEGEI.

Positions 130, 134, 136, and 169 each coordinate a divalent metal cation.

It belongs to the non-heme iron-dependent dioxygenase family. As to quaternary structure, homodimer. The cofactor is a divalent metal cation.

It catalyses the reaction S,S-dimethyl-beta-propiothetin = acrylate + dimethyl sulfide + H(+). Its function is as follows. May act as a dimethylsulfoniopropionate (DMSP) in vitro, releasing dimethyl sulfide (DMS). DMS is the principal form by which sulfur is transported from oceans to the atmosphere. The real activity of the protein is however subject to debate and it is unclear whether it constitutes a real dimethylsulfoniopropionate lyase in vivo. This is Dimethylsulfoniopropionate lyase DddQ from Ruegeria pomeroyi (strain ATCC 700808 / DSM 15171 / DSS-3) (Silicibacter pomeroyi).